The chain runs to 148 residues: Large ribosomal subunit protein uL15 (148 aa).

A disordered region spans residues 1–57; that stretch reads MRLNDVKPQKGSKKRRRRVGRGISAGQGASAGLGMRGQKSRSGSGTRPGFEGGQQPL. Positions 10-20 are enriched in basic residues; it reads KGSKKRRRRVG. Residues 23–35 are compositionally biased toward gly residues; that stretch reads ISAGQGASAGLGM.

This sequence belongs to the universal ribosomal protein uL15 family. Part of the 50S ribosomal subunit.

Binds to the 23S rRNA. This Nostoc sp. (strain PCC 7120 / SAG 25.82 / UTEX 2576) protein is Large ribosomal subunit protein uL15.